Reading from the N-terminus, the 140-residue chain is uncharacterized protein (140 aa).

The protein belongs to the peptidase S24 family.

This is an uncharacterized protein from Haemophilus influenzae (strain ATCC 51907 / DSM 11121 / KW20 / Rd).